The sequence spans 224 residues: Thiamine-phosphate synthase (224 aa).

Residues 44–48 (QFREK) and N79 each bind 4-amino-2-methyl-5-(diphosphooxymethyl)pyrimidine. Mg(2+) is bound by residues D80 and D99. S117 lines the 4-amino-2-methyl-5-(diphosphooxymethyl)pyrimidine pocket. A 2-[(2R,5Z)-2-carboxy-4-methylthiazol-5(2H)-ylidene]ethyl phosphate-binding site is contributed by 143–145 (TST). 4-amino-2-methyl-5-(diphosphooxymethyl)pyrimidine is bound at residue K146. 2-[(2R,5Z)-2-carboxy-4-methylthiazol-5(2H)-ylidene]ethyl phosphate-binding positions include G175 and 195-196 (IS).

This sequence belongs to the thiamine-phosphate synthase family. Mg(2+) is required as a cofactor.

It carries out the reaction 2-[(2R,5Z)-2-carboxy-4-methylthiazol-5(2H)-ylidene]ethyl phosphate + 4-amino-2-methyl-5-(diphosphooxymethyl)pyrimidine + 2 H(+) = thiamine phosphate + CO2 + diphosphate. The catalysed reaction is 2-(2-carboxy-4-methylthiazol-5-yl)ethyl phosphate + 4-amino-2-methyl-5-(diphosphooxymethyl)pyrimidine + 2 H(+) = thiamine phosphate + CO2 + diphosphate. The enzyme catalyses 4-methyl-5-(2-phosphooxyethyl)-thiazole + 4-amino-2-methyl-5-(diphosphooxymethyl)pyrimidine + H(+) = thiamine phosphate + diphosphate. It participates in cofactor biosynthesis; thiamine diphosphate biosynthesis; thiamine phosphate from 4-amino-2-methyl-5-diphosphomethylpyrimidine and 4-methyl-5-(2-phosphoethyl)-thiazole: step 1/1. Condenses 4-methyl-5-(beta-hydroxyethyl)thiazole monophosphate (THZ-P) and 2-methyl-4-amino-5-hydroxymethyl pyrimidine pyrophosphate (HMP-PP) to form thiamine monophosphate (TMP). The sequence is that of Thiamine-phosphate synthase from Bacillus cereus (strain ATCC 10987 / NRS 248).